We begin with the raw amino-acid sequence, 72 residues long: Exodeoxyribonuclease 7 small subunit (72 aa).

This sequence belongs to the XseB family. In terms of assembly, heterooligomer composed of large and small subunits.

The protein resides in the cytoplasm. It catalyses the reaction Exonucleolytic cleavage in either 5'- to 3'- or 3'- to 5'-direction to yield nucleoside 5'-phosphates.. Functionally, bidirectionally degrades single-stranded DNA into large acid-insoluble oligonucleotides, which are then degraded further into small acid-soluble oligonucleotides. This Chlamydia trachomatis serovar D (strain ATCC VR-885 / DSM 19411 / UW-3/Cx) protein is Exodeoxyribonuclease 7 small subunit.